Here is a 99-residue protein sequence, read N- to C-terminus: Small ribosomal subunit protein bS20 (99 aa).

This sequence belongs to the bacterial ribosomal protein bS20 family.

In terms of biological role, binds directly to 16S ribosomal RNA. The protein is Small ribosomal subunit protein bS20 of Cyanothece sp. (strain PCC 7425 / ATCC 29141).